The primary structure comprises 35 residues: Mu-theraphotoxin-Pm1a (35 aa).

3 disulfide bridges follow: cysteine 3-cysteine 17, cysteine 10-cysteine 22, and cysteine 16-cysteine 29. Phenylalanine 35 is modified (phenylalanine amide).

Belongs to the neurotoxin 10 (Hwtx-1) family. 62 (Vatx) subfamily. As to expression, expressed by the venom gland.

Its subcellular location is the secreted. Gating-modifier toxin with weak activity on Nav1.7/SCN9A and Nav1.8/SCN10A. Inhibits Nav1.7/SCN9A peak current (IC(50)=334 nM) and shifts the voltage dependence of activation to more depolarised membrane potentials. Shows 21% peak current inhibition (at 10 uM) on Nav1.8/SCN10A sodium channels. The sequence is that of Mu-theraphotoxin-Pm1a from Poecilotheria metallica (Metallic blue ornamental tree spider).